Consider the following 180-residue polypeptide: Ribonuclease M5 (180 aa).

Residues 5–90 (KQIIIVEGKT…NAFIKKDDIS (86 aa)) form the Toprim domain. Mg(2+) is bound by residues Glu-11, Asp-59, and Asp-61.

The protein belongs to the ribonuclease M5 family. Mg(2+) serves as cofactor.

The protein resides in the cytoplasm. The enzyme catalyses Endonucleolytic cleavage of RNA, removing 21 and 42 nucleotides, respectively, from the 5'- and 3'-termini of a 5S-rRNA precursor.. Required for correct processing of both the 5' and 3' ends of 5S rRNA precursor. Cleaves both sides of a double-stranded region yielding mature 5S rRNA in one step. This Mycoplasma capricolum subsp. capricolum (strain California kid / ATCC 27343 / NCTC 10154) protein is Ribonuclease M5.